A 490-amino-acid chain; its full sequence is Adenylyltransferase and sulfurtransferase uba4 (490 aa).

Residues 33-54 (EAAKTPPYSDSTETDRGSSSST) are disordered. ATP contacts are provided by residues glycine 96, aspartate 117, 124-128 (SNLHR), lysine 141, and 185-186 (DH). Zn(2+) is bound by residues cysteine 234 and cysteine 237. Cysteine 251 functions as the Glycyl thioester intermediate; for adenylyltransferase activity in the catalytic mechanism. The Zn(2+) site is built by cysteine 323 and cysteine 326. The Rhodanese domain maps to 379–488 (EHGKPVLLDV…WKREVDSTLP (110 aa)). The active-site Cysteine persulfide intermediate; for sulfurtransferase activity is the cysteine 443.

In the N-terminal section; belongs to the HesA/MoeB/ThiF family. UBA4 subfamily. Zn(2+) is required as a cofactor.

The protein localises to the cytoplasm. It localises to the cytosol. The catalysed reaction is [molybdopterin-synthase sulfur-carrier protein]-C-terminal Gly-Gly + ATP + H(+) = [molybdopterin-synthase sulfur-carrier protein]-C-terminal Gly-Gly-AMP + diphosphate. It carries out the reaction [molybdopterin-synthase sulfur-carrier protein]-C-terminal Gly-Gly-AMP + S-sulfanyl-L-cysteinyl-[cysteine desulfurase] + AH2 = [molybdopterin-synthase sulfur-carrier protein]-C-terminal-Gly-aminoethanethioate + L-cysteinyl-[cysteine desulfurase] + A + AMP + 2 H(+). The protein operates within tRNA modification; 5-methoxycarbonylmethyl-2-thiouridine-tRNA biosynthesis. Functionally, plays a central role in 2-thiolation of mcm(5)S(2)U at tRNA wobble positions of cytosolic tRNA(Lys), tRNA(Glu) and tRNA(Gln). Also essential during biosynthesis of the molybdenum cofactor. Acts by mediating the C-terminal thiocarboxylation of sulfur carriers URM1 and MOCS2A. Its N-terminus first activates urm1 and MOCS2A as acyl-adenylates (-COAMP), then the persulfide sulfur on the catalytic cysteine is transferred to URM1 and MOCS2A to form thiocarboxylation (-COSH) of their C-terminus. The reaction probably involves hydrogen sulfide that is generated from the persulfide intermediate and that acts as a nucleophile towards URM1 and MOCS2A. Subsequently, a transient disulfide bond is formed. Does not use thiosulfate as sulfur donor; NFS1 probably acting as a sulfur donor for thiocarboxylation reactions. The chain is Adenylyltransferase and sulfurtransferase uba4 from Pyricularia oryzae (strain 70-15 / ATCC MYA-4617 / FGSC 8958) (Rice blast fungus).